Here is a 131-residue protein sequence, read N- to C-terminus: Ribonuclease VapC3 (131 aa).

The PINc domain maps to 4–121 (VVDASAIAAL…GKLLTLDRQL (118 aa)). D6, D100, and D118 together coordinate Mg(2+).

The protein belongs to the PINc/VapC protein family. As to quaternary structure, homodimer. Forms a complex with putative antitoxin VapB3, possibly VapB(2)-VapC(2). Mg(2+) serves as cofactor.

Its activity is regulated as follows. Inhibited by EDTA. Toxic component of a type II toxin-antitoxin (TA) system. Has ribonuclease activity. The sequence is that of Ribonuclease VapC3 from Pyrobaculum aerophilum (strain ATCC 51768 / DSM 7523 / JCM 9630 / CIP 104966 / NBRC 100827 / IM2).